A 476-amino-acid chain; its full sequence is Rifampicin monooxygenase (476 aa).

Threonine 12, glutamate 31, lysine 32, glutamine 98, leucine 122, and threonine 156 together coordinate FAD. The rifampicin site is built by arginine 196 and arginine 213. FAD-binding residues include aspartate 277, leucine 290, and asparagine 291.

It belongs to the rifampicin monooxygenase family. It depends on FAD as a cofactor.

It carries out the reaction rifampicin + NADPH + O2 = rifampicin para-naphthoquinone carboxamide + NADP(+) + H2O + H(+). The enzyme catalyses rifampicin + NADH + O2 = rifampicin para-naphthoquinone carboxamide + NAD(+) + H2O + H(+). The catalysed reaction is rifamycin SV + NADPH + O2 = rifamycin SV para-naphthoquinone carboxamide + NADP(+) + H2O. It catalyses the reaction rifamycin SV + NADH + O2 = rifamycin SV para-naphthoquinone carboxamide + NAD(+) + H2O. In terms of biological role, monooxygenase that can modify rifampicin, thereby inactivating its antibiotic activity. Inactivates a broad range of rifamycin antibiotics. The sequence is that of Rifampicin monooxygenase from Streptomyces venezuelae (strain ATCC 10712 / CBS 650.69 / DSM 40230 / JCM 4526 / NBRC 13096 / PD 04745).